The chain runs to 715 residues: Fatty acid oxidation complex subunit alpha (715 aa).

The enoyl-CoA hydratase/isomerase stretch occupies residues 1–190 (MIYEGKAITV…KVGAVDAVVA (190 aa)). Residue D297 participates in substrate binding. The segment at 312 to 715 (HDVKQAAVLG…MAKNGQRFFN (404 aa)) is 3-hydroxyacyl-CoA dehydrogenase. Residues M325, D344, 401-403 (VVE), K408, and S430 each bind NAD(+). H451 functions as the For 3-hydroxyacyl-CoA dehydrogenase activity in the catalytic mechanism. Residue N454 participates in NAD(+) binding. Residues N501 and Y660 each coordinate substrate.

It in the N-terminal section; belongs to the enoyl-CoA hydratase/isomerase family. The protein in the C-terminal section; belongs to the 3-hydroxyacyl-CoA dehydrogenase family. As to quaternary structure, heterotetramer of two alpha chains (FadB) and two beta chains (FadA).

It catalyses the reaction a (3S)-3-hydroxyacyl-CoA + NAD(+) = a 3-oxoacyl-CoA + NADH + H(+). The enzyme catalyses a (3S)-3-hydroxyacyl-CoA = a (2E)-enoyl-CoA + H2O. It carries out the reaction a 4-saturated-(3S)-3-hydroxyacyl-CoA = a (3E)-enoyl-CoA + H2O. The catalysed reaction is (3S)-3-hydroxybutanoyl-CoA = (3R)-3-hydroxybutanoyl-CoA. It catalyses the reaction a (3Z)-enoyl-CoA = a 4-saturated (2E)-enoyl-CoA. The enzyme catalyses a (3E)-enoyl-CoA = a 4-saturated (2E)-enoyl-CoA. Its pathway is lipid metabolism; fatty acid beta-oxidation. Involved in the aerobic and anaerobic degradation of long-chain fatty acids via beta-oxidation cycle. Catalyzes the formation of 3-oxoacyl-CoA from enoyl-CoA via L-3-hydroxyacyl-CoA. It can also use D-3-hydroxyacyl-CoA and cis-3-enoyl-CoA as substrate. The chain is Fatty acid oxidation complex subunit alpha from Pseudomonas putida (Arthrobacter siderocapsulatus).